Here is a 552-residue protein sequence, read N- to C-terminus: 5'-AMP-activated protein kinase catalytic subunit alpha-2 (552 aa).

The 253-residue stretch at 16 to 268 (YVLGDTLGVG…IKDIREHEWF (253 aa)) folds into the Protein kinase domain. Residues 22-30 (LGVGTFGKV) and K45 contribute to the ATP site. D139 (proton acceptor) is an active-site residue. The residue at position 172 (T172) is a Phosphothreonine; by LKB1 and CaMKK2. The residue at position 258 (T258) is a Phosphothreonine. The tract at residues 291–376 (EAVKEVCEKF…PERMPPLIAD (86 aa)) is AIS. Position 377 is a phosphoserine (S377). The tract at residues 477-521 (VEQRSGSSTPQRSCSAAGLHRPRSSFDSTTAESHSLSGSLTGSLT) is disordered. A compositionally biased stretch (polar residues) spans 480–490 (RSGSSTPQRSC). Residue S491 is modified to Phosphoserine. Polar residues predominate over residues 501–510 (SFDSTTAESH). Positions 511–521 (SLSGSLTGSLT) are enriched in low complexity.

It belongs to the protein kinase superfamily. CAMK Ser/Thr protein kinase family. SNF1 subfamily. In terms of assembly, AMPK is a heterotrimer of an alpha catalytic subunit (PRKAA1 or PRKAA2), a beta (PRKAB1 or PRKAB2) and a gamma non-catalytic subunits (PRKAG1, PRKAG2 or PRKAG3). Interacts with FNIP1 and FNIP2. Interacts with DUSP29. Interacts with ARF6. The phosphorylated form at Thr-172 mediated by CamKK2 interacts with ACSS2. The cofactor is Mg(2+). In terms of processing, ubiquitinated. Post-translationally, phosphorylated at Thr-172 by STK11/LKB1 in complex with STE20-related adapter-alpha (STRADA) pseudo kinase and CAB39. Also phosphorylated at Thr-172 by CAMKK2; triggered by a rise in intracellular calcium ions, without detectable changes in the AMP/ATP ratio. CAMKK1 can also phosphorylate Thr-172, but at much lower level. Dephosphorylated by protein phosphatase 2A and 2C (PP2A and PP2C). Phosphorylated by ULK1; leading to negatively regulate AMPK activity and suggesting the existence of a regulatory feedback loop between ULK1 and AMPK. Dephosphorylated by PPM1A and PPM1B at Thr-172 (mediated by STK11/LKB1).

The protein resides in the cytoplasm. It is found in the nucleus. It catalyses the reaction L-seryl-[protein] + ATP = O-phospho-L-seryl-[protein] + ADP + H(+). The catalysed reaction is L-threonyl-[protein] + ATP = O-phospho-L-threonyl-[protein] + ADP + H(+). It carries out the reaction L-seryl-[acetyl-CoA carboxylase] + ATP = O-phospho-L-seryl-[acetyl-CoA carboxylase] + ADP + H(+). The enzyme catalyses L-seryl-[3-hydroxy-3-methylglutaryl-coenzyme A reductase] + ATP = O-phospho-L-seryl-[3-hydroxy-3-methylglutaryl-coenzyme A reductase] + ADP + H(+). With respect to regulation, activated by phosphorylation on Thr-172. Binding of AMP to non-catalytic gamma subunit (PRKAG1, PRKAG2 or PRKAG3) results in allosteric activation, inducing phosphorylation on Thr-172. AMP-binding to gamma subunit also sustains activity by preventing dephosphorylation of Thr-172. ADP also stimulates Thr-172 phosphorylation, without stimulating already phosphorylated AMPK. ATP promotes dephosphorylation of Thr-172, rendering the enzyme inactive. Under physiological conditions AMPK mainly exists in its inactive form in complex with ATP, which is much more abundant than AMP. Selectively inhibited by compound C (6-[4-(2-Piperidin-1-yl-ethoxy)-phenyl)]-3-pyridin-4-yl-pyyrazolo[1,5-a] pyrimidine. Activated by resveratrol, a natural polyphenol present in red wine, and S17834, a synthetic polyphenol. Salicylate/aspirin directly activates kinase activity, primarily by inhibiting Thr-172 dephosphorylation. Functionally, catalytic subunit of AMP-activated protein kinase (AMPK), an energy sensor protein kinase that plays a key role in regulating cellular energy metabolism. In response to reduction of intracellular ATP levels, AMPK activates energy-producing pathways and inhibits energy-consuming processes: inhibits protein, carbohydrate and lipid biosynthesis, as well as cell growth and proliferation. AMPK acts via direct phosphorylation of metabolic enzymes, and by longer-term effects via phosphorylation of transcription regulators. Regulates lipid synthesis by phosphorylating and inactivating lipid metabolic enzymes such as ACACA, ACACB, GYS1, HMGCR and LIPE; regulates fatty acid and cholesterol synthesis by phosphorylating acetyl-CoA carboxylase (ACACA and ACACB) and hormone-sensitive lipase (LIPE) enzymes, respectively. Promotes lipolysis of lipid droplets by mediating phosphorylation of isoform 1 of CHKA (CHKalpha2). Regulates insulin-signaling and glycolysis by phosphorylating IRS1, PFKFB2 and PFKFB3. Involved in insulin receptor/INSR internalization. AMPK stimulates glucose uptake in muscle by increasing the translocation of the glucose transporter SLC2A4/GLUT4 to the plasma membrane, possibly by mediating phosphorylation of TBC1D4/AS160. Regulates transcription and chromatin structure by phosphorylating transcription regulators involved in energy metabolism such as CRTC2/TORC2, FOXO3, histone H2B, HDAC5, MEF2C, MLXIPL/ChREBP, EP300, HNF4A, p53/TP53, SREBF1, SREBF2 and PPARGC1A. Acts as a key regulator of glucose homeostasis in liver by phosphorylating CRTC2/TORC2, leading to CRTC2/TORC2 sequestration in the cytoplasm. In response to stress, phosphorylates 'Ser-36' of histone H2B (H2BS36ph), leading to promote transcription. Acts as a key regulator of cell growth and proliferation by phosphorylating FNIP1, TSC2, RPTOR, WDR24 and ATG1/ULK1: in response to nutrient limitation, negatively regulates the mTORC1 complex by phosphorylating RPTOR component of the mTORC1 complex and by phosphorylating and activating TSC2. Also phosphorylates and inhibits GATOR2 subunit WDR24 in response to nutrient limitation, leading to suppress glucose-mediated mTORC1 activation. In response to energetic stress, phosphorylates FNIP1, inactivating the non-canonical mTORC1 signaling, thereby promoting nuclear translocation of TFEB and TFE3, and inducing transcription of lysosomal or autophagy genes. In response to nutrient limitation, promotes autophagy by phosphorylating and activating ATG1/ULK1. In that process also activates WDR45/WIPI4. Phosphorylates CASP6, thereby preventing its autoprocessing and subsequent activation. AMPK also acts as a regulator of circadian rhythm by mediating phosphorylation of CRY1, leading to destabilize it. May regulate the Wnt signaling pathway by phosphorylating CTNNB1, leading to stabilize it. Also acts as a regulator of cellular polarity by remodeling the actin cytoskeleton; probably by indirectly activating myosin. Also phosphorylates CFTR, EEF2K, KLC1, NOS3 and SLC12A1. Plays an important role in the differential regulation of pro-autophagy (composed of PIK3C3, BECN1, PIK3R4 and UVRAG or ATG14) and non-autophagy (composed of PIK3C3, BECN1 and PIK3R4) complexes, in response to glucose starvation. Can inhibit the non-autophagy complex by phosphorylating PIK3C3 and can activate the pro-autophagy complex by phosphorylating BECN1. Upon glucose starvation, promotes ARF6 activation in a kinase-independent manner leading to cell migration. Upon glucose deprivation mediates the phosphorylation of ACSS2 at 'Ser-659', which exposes the nuclear localization signal of ACSS2, required for its interaction with KPNA1 and nuclear translocation. Upon stress, regulates mitochondrial fragmentation through phosphorylation of MTFR1L. The sequence is that of 5'-AMP-activated protein kinase catalytic subunit alpha-2 (PRKAA2) from Pongo abelii (Sumatran orangutan).